Consider the following 395-residue polypeptide: Chaperone protein DnaJ (395 aa).

Positions 5 to 70 (DFYEVLGVDK…NKRAAYDRMG (66 aa)) constitute a J domain. Residues 145–223 (GKDETIKVPT…CDGVGRVRKT (79 aa)) form a CR-type zinc finger. Zn(2+) contacts are provided by cysteine 158, cysteine 161, cysteine 175, cysteine 178, cysteine 197, cysteine 200, cysteine 211, and cysteine 214. CXXCXGXG motif repeat units follow at residues 158-165 (CERCDGQG), 175-182 (CGTCQGAG), 197-204 (CPQCGGRG), and 211-218 (CNDCDGVG).

It belongs to the DnaJ family. Homodimer. Zn(2+) serves as cofactor.

It localises to the cytoplasm. In terms of biological role, participates actively in the response to hyperosmotic and heat shock by preventing the aggregation of stress-denatured proteins and by disaggregating proteins, also in an autonomous, DnaK-independent fashion. Unfolded proteins bind initially to DnaJ; upon interaction with the DnaJ-bound protein, DnaK hydrolyzes its bound ATP, resulting in the formation of a stable complex. GrpE releases ADP from DnaK; ATP binding to DnaK triggers the release of the substrate protein, thus completing the reaction cycle. Several rounds of ATP-dependent interactions between DnaJ, DnaK and GrpE are required for fully efficient folding. Also involved, together with DnaK and GrpE, in the DNA replication of plasmids through activation of initiation proteins. The polypeptide is Chaperone protein DnaJ (Maricaulis maris (strain MCS10) (Caulobacter maris)).